The chain runs to 172 residues: Probable chorismate pyruvate-lyase (172 aa).

4 residues coordinate substrate: Met-37, Arg-79, Leu-117, and Glu-158.

It belongs to the UbiC family.

The protein localises to the cytoplasm. The enzyme catalyses chorismate = 4-hydroxybenzoate + pyruvate. It functions in the pathway cofactor biosynthesis; ubiquinone biosynthesis. In terms of biological role, removes the pyruvyl group from chorismate, with concomitant aromatization of the ring, to provide 4-hydroxybenzoate (4HB) for the ubiquinone pathway. The polypeptide is Probable chorismate pyruvate-lyase (Bartonella quintana (strain Toulouse) (Rochalimaea quintana)).